Here is a 2053-residue protein sequence, read N- to C-terminus: MWLVTFLLLLDSLHKARPEDVGTSLYFVNDSLQQVTFSSSVGVVVPCPAAGSPSAALRWYLATGDDIYDVPHIRHVHANGTLQLYPFSPSAFNSFIHDNDYFCTAENAAGKIRSPNIRVKAVFREPYTVRVEDQRSMRGNVAVFKCLIPSSVQEYVSVVSWEKDTVSIIPEHRFFITYHGGLYISDVQKEDALSTYRCITKHKYSGETRQSNGARLSVTDPAESIPTILDGFHSQEVWAGHTVELPCTASGYPIPAIRWLKDGRPLPADSRWTKRITGLTISDLRTEDSGTYICEVTNTFGSAEATGILMVIDPLHVTLTPKKLKTGIGSTVILSCALTGSPEFTIRWYRNTELVLPDEAISIRGLSNETLLITSAQKSHSGAYQCFATRKAQTAQDFAIIALEDGTPRIVSSFSEKVVNPGEQFSLMCAAKGAPPPTVTWALDDEPIVRDGSHRTNQYTMSDGTTISHMNVTGPQIRDGGVYRCTARNLVGSAEYQARINVRGPPSIRAMRNITAVAGRDTLINCRVIGYPYYSIKWYKDALLLPDNHRQVVFENGTLKLTDVQKGMDEGEYLCSVLIQPQLSISQSVHVAVKVPPLIQPFEFPPASIGQLLYIPCVVSSGDMPIRITWRKDGQVIISGSGVTIESKEFMSSLQISSVSLKHNGNYTCIASNAAATVSRERQLIVRVPPRFVVQPNNQDGIYGKAGVLNCSVDGYPPPKVMWKHAKGSGNPQQYHPVPLTGRIQILPNSSLLIRHVLEEDIGYYLCQASNGVGTDISKSMFLTVKIPAMITSHPNTTIAIKGHAKELNCTARGERPIIIRWEKGDTVIDPDRVMRYAIATKDNGDEVVSTLKLKPADRGDSVFFSCHAINSYGEDRGLIQLTVQEPPDPPELEIREVKARSMNLRWTQRFDGNSIITGFDIEYKNKSDSWDFKQSTRNISPTINQANIVDLHPASVYSIRMYSFNKIGRSEPSKELTISTEEAAPDGPPMDVTLQPVTSQSIQVTWKAPKKELQNGVIRGYQIGYRENSPGSNGQYSIVEMKATGDSEVYTLDNLKKFAQYGVVVQAFNRAGTGPSSSEINATTLEDVPSQPPENVRALSITSDVAVISWSEPPRSTLNGVLKGYRVIFWSLYVDGEWGEMQNITTTRERVELRGMEKFTNYSVQVLAYTQAGDGVRSSVLYIQTKEDVPGPPAGIKAVPSSASSVVVSWLPPTKPNGVIRKYTIFCSSPGSGQPAPSEYETSPEQLFYRIAHLNRGQQYLLWVAAVTSAGRGNSSEKVTIEPAGKAPAKIISFGGTVTTPWMKDVRLPCNSVGDPAPAVKWTKDSEDSAIPVSMDGHRLIHTNGTLLLRAVKAEDSGYYTCTATNTGGFDTIIVNLLVQVPPDQPRLTVSKTSASSITLTWIPGDNGGSSIRGFVLQYSVDNSEEWKDVFISSSERSFKLDSLKCGTWYKVKLAAKNSVGSGRISEIIEAKTHGREPSFSKDQHLFTHINSTHARLNLQGWNNGGCPITAIVLEYRPKGTWAWQGLRANSSGEVFLTELREATWYELRMRACNSAGCGNETAQFATLDYDGSTIPPIKSAQGEGDDVKKLFTIGCPVILATLGVALLFIVRKKRKEKRLKRLRDAKSLAEMLISKNNRSFDTPVKGPPQGPRLHIDIPRVQLLIEDKEGIKQLGDDKATIPVTDAEFSQAVNPQSFCTGVSLHHPTLIQSTGPLIDMSDIRPGTNPVSRKNVKSAHSTRNRYSSQWTLTKCQASTPARTLTSDWRTVGSQHGVTVTESDSYSASLSQDTDKGRNSMVSTESASSTYEELARAYEHAKLEEQLQHAKFEITECFISDSSSDQMTTGTNENADSMTSMSTPSEPGICRFTASPPKPQDADRGKNVAVPIPHRANKSDYCNLPLYAKSEAFFRKADGREPCPVVPPREASIRNLARTYHTQARHLTLDPASKSLGLPHPGAPAAASTATLPQRTLAMPAPPAGTAPPAPGPTPAEPPTAPSAAPPAPSTEPPRAGGPHTKMGGSRDSLLEMSTSGVGRSQKQGAGAYSKSYTLV.

The signal sequence occupies residues 1-18 (MWLVTFLLLLDSLHKARP). Ig-like C2-type domains follow at residues 19–119 (EDVG…NIRV), 115–217 (PNIR…ARLS), 226–306 (PTIL…AEAT), 314–402 (PLHV…AIIA), 408–501 (PRIV…ARIN), 506–586 (PSIR…LSIS), 596–685 (PPLI…RQLI), 690–784 (PRFV…MFLT), and 788–885 (PAMI…LTVQ). Residues 19–1591 (EDVGTSLYFV…AQGEGDDVKK (1573 aa)) are Extracellular-facing. N29 and N79 each carry an N-linked (GlcNAc...) asparagine glycan. 5 disulfides stabilise this stretch: C47–C103, C146–C198, C247–C294, C336–C386, and C429–C485. Residues N368, N471, N513, N556, N666, N710, N749, N796, and N809 are each glycosylated (N-linked (GlcNAc...) asparagine). Cystine bridges form between C526-C575 and C617-C669. A disulfide bridge connects residues C711 and C767. A disulfide bond links C810 and C867. Fibronectin type-III domains follow at residues 887 to 984 (PPDP…TEEA), 989 to 1088 (PPMD…TLED), 1093 to 1189 (PPEN…TKED), and 1193 to 1288 (PPAG…AGKA). N-linked (GlcNAc...) asparagine glycans are attached at residues N926, N1082, N1144, N1162, N1275, and N1345. In terms of domain architecture, Ig-like C2-type 10 spans 1278–1377 (EKVTIEPAGK…TGGFDTIIVN (100 aa)). A disulfide bridge links C1311 with C1363. 2 consecutive Fibronectin type-III domains span residues 1383 to 1477 (PPDQ…THGR) and 1478 to 1578 (EPSF…TIPP). N-linked (GlcNAc...) asparagine glycans are attached at residues N1492, N1531, and N1561. A helical transmembrane segment spans residues 1592–1612 (LFTIGCPVILATLGVALLFIV). The Cytoplasmic portion of the chain corresponds to 1613-2053 (RKKRKEKRLK…GAYSKSYTLV (441 aa)). Disordered stretches follow at residues 1715–1741 (PLID…HSTR), 1773–1803 (HGVT…STES), 1840–1862 (SSDQ…STPS), and 1974–2053 (LAMP…YTLV). Residues 1732–1741 (KNVKSAHSTR) are compositionally biased toward basic residues. Over residues 1773–1789 (HGVTVTESDSYSASLSQ) the composition is skewed to polar residues. The span at 1977-2009 (PAPPAGTAPPAPGPTPAEPPTAPSAAPPAPSTE) shows a compositional bias: pro residues. Residues 2029–2041 (EMSTSGVGRSQKQ) show a composition bias toward polar residues.

Homodimer; mediates homophilic interactions to promote cell adhesion. In terms of tissue distribution, detected in heart, liver, pancreas, skeletal muscle, kidney and in brain, in particular in the amygdala, caudate nucleus, corpus callosum, hippocampus, substantia nigra, thalamus and subthalamus.

It localises to the cell membrane. It is found in the synapse. Functionally, cell adhesion molecule that plays a role in neuronal self-avoidance. Promotes repulsion between specific neuronal processes of either the same cell or the same subtype of cells. Promotes both isoneuronal self-avoidance for creating an orderly neurite arborization in retinal rod bipolar cells and heteroneuronal self-avoidance to maintain mosaic spacing between AII amacrine cells. Adhesion molecule that promotes lamina-specific synaptic connections in the retina: expressed in specific subsets of interneurons and retinal ganglion cells (RGCs) and promotes synaptic connectivity via homophilic interactions. This chain is Cell adhesion molecule DSCAML1 (DSCAML1), found in Homo sapiens (Human).